The following is a 206-amino-acid chain: FMN-dependent NADH:quinone oxidoreductase (206 aa).

FMN contacts are provided by residues 15–17 (SVS), 94–97 (MYNF), and 138–141 (TRGG).

The protein belongs to the azoreductase type 1 family. As to quaternary structure, homodimer. Requires FMN as cofactor.

The catalysed reaction is 2 a quinone + NADH + H(+) = 2 a 1,4-benzosemiquinone + NAD(+). It carries out the reaction N,N-dimethyl-1,4-phenylenediamine + anthranilate + 2 NAD(+) = 2-(4-dimethylaminophenyl)diazenylbenzoate + 2 NADH + 2 H(+). Its function is as follows. Quinone reductase that provides resistance to thiol-specific stress caused by electrophilic quinones. In terms of biological role, also exhibits azoreductase activity. Catalyzes the reductive cleavage of the azo bond in aromatic azo compounds to the corresponding amines. In Rhizobium meliloti (strain 1021) (Ensifer meliloti), this protein is FMN-dependent NADH:quinone oxidoreductase.